The sequence spans 256 residues: MVKSHIGSWILVLFVAMWSDVGLCKKRPKPGGGWNTGGSRYPGQGSPGGNRYPPQGGGGWGQPHGGGWGQPHGGGWGQPHGGGWGQPHGGGGWGQGGSHSQWNKPSKPKTNMKHVAGAAAAGAVVGGLGGYMLGSAMSRPLIHFGNDYEDRYYRENMYRYPNQVYYRPVDRYSNQNNFVHDCVNITVKQHTVTTTTKGENFTETDIKIMERVVEQMCITQYQRESQAYYQRGASVILFSSPPVILLISFLIFLIVG.

The signal sequence occupies residues 1–24 (MVKSHIGSWILVLFVAMWSDVGLC). Residues 25-233 (KKRPKPGGGW…ESQAYYQRGA (209 aa)) are interaction with GRB2, ERI3 and SYN1. The disordered stretch occupies residues 28–110 (PKPGGGWNTG…QWNKPSKPKT (83 aa)). 5 tandem repeats follow at residues 54–62 (PQGGGGWGQ), 63–70 (PHGGGWGQ), 71–78 (PHGGGWGQ), 79–86 (PHGGGWGQ), and 87–95 (PHGGGGWGQ). The tract at residues 54–95 (PQGGGGWGQPHGGGWGQPHGGGWGQPHGGGWGQPHGGGGWGQ) is 5 X 8 AA tandem repeats of P-H-G-G-G-W-G-Q. Over residues 55-97 (QGGGGWGQPHGGGWGQPHGGGWGQPHGGGWGQPHGGGGWGQGG) the composition is skewed to gly residues. Residues H64, G65, G66, H72, G73, G74, H80, G81, G82, H88, G90, and G91 each contribute to the Cu(2+) site. Residues C182 and C217 are joined by a disulfide bond. N184 and N200 each carry an N-linked (GlcNAc...) (complex) asparagine glycan. A233 is lipidated: GPI-anchor amidated alanine. A propeptide spans 234-256 (SVILFSSPPVILLISFLIFLIVG) (removed in mature form).

This sequence belongs to the prion family. In terms of assembly, monomer and homodimer. Has a tendency to aggregate into amyloid fibrils containing a cross-beta spine, formed by a steric zipper of superposed beta-strands. Soluble oligomers may represent an intermediate stage on the path to fibril formation. Copper binding may promote oligomerization. Interacts with GRB2, APP, ERI3/PRNPIP and SYN1. Mislocalized cytosolically exposed PrP interacts with MGRN1; this interaction alters MGRN1 subcellular location and causes lysosomal enlargement. Interacts with KIAA1191.

It is found in the cell membrane. The protein localises to the golgi apparatus. In terms of biological role, its primary physiological function is unclear. Has cytoprotective activity against internal or environmental stresses. May play a role in neuronal development and synaptic plasticity. May be required for neuronal myelin sheath maintenance. May play a role in iron uptake and iron homeostasis. Soluble oligomers are toxic to cultured neuroblastoma cells and induce apoptosis (in vitro). Association with GPC1 (via its heparan sulfate chains) targets PRNP to lipid rafts. Also provides Cu(2+) or Zn(2+) for the ascorbate-mediated GPC1 deaminase degradation of its heparan sulfate side chains. This Ovis aries (Sheep) protein is Major prion protein (PRNP).